A 154-amino-acid polypeptide reads, in one-letter code: Histone H2B.5 (154 aa).

The span at 1-25 (MAPKAEKKPAAKKVAEEEPSEKAAP) shows a compositional bias: basic and acidic residues. The interval 1 to 62 (MAPKAEKKPA…DKKGRKKAKK (62 aa)) is disordered. N6-acetyllysine is present on residues Lys-7 and Lys-39. Residue Lys-150 forms a Glycyl lysine isopeptide (Lys-Gly) (interchain with G-Cter in ubiquitin) linkage.

This sequence belongs to the histone H2B family. In terms of assembly, the nucleosome is a histone octamer containing two molecules each of H2A, H2B, H3 and H4 assembled in one H3-H4 heterotetramer and two H2A-H2B heterodimers. The octamer wraps approximately 147 bp of DNA. In terms of processing, can be acetylated to form H2BK6ac and H2BK33ac. Post-translationally, monoubiquitinated to form H2BK143ub1; may give a specific tag for epigenetic transcriptional activation.

The protein localises to the nucleus. The protein resides in the chromosome. In terms of biological role, core component of nucleosome. Nucleosomes wrap and compact DNA into chromatin, limiting DNA accessibility to the cellular machineries which require DNA as a template. Histones thereby play a central role in transcription regulation, DNA repair, DNA replication and chromosomal stability. DNA accessibility is regulated via a complex set of post-translational modifications of histones, also called histone code, and nucleosome remodeling. The polypeptide is Histone H2B.5 (Zea mays (Maize)).